Consider the following 158-residue polypeptide: uncharacterized protein (158 aa).

This is an uncharacterized protein from Acidianus convivator (ABV).